Consider the following 216-residue polypeptide: DegV domain-containing protein UU190 (216 aa).

One can recognise a DegV domain in the interval methionine 1 to alanine 215. Serine 26 contacts hexadecanoate.

Its function is as follows. May bind long-chain fatty acids, such as palmitate, and may play a role in lipid transport or fatty acid metabolism. This Ureaplasma parvum serovar 3 (strain ATCC 700970) protein is DegV domain-containing protein UU190.